A 1198-amino-acid chain; its full sequence is Structural polyprotein (1198 aa).

Residues 2–15 form an interaction with host EXOC1 region; the sequence is TKKPGGPGKNRAIN. Residues 37 to 72 form a hydrophobic; homodimerization of capsid protein C region; that stretch reads LLDGRGPVRFVLALITFFKFTALAPTKALLGRWKAV. A propeptide spans 106–127 (ER anchor for the capsid protein C, removed in mature form by serine protease NS3); the sequence is GGNEGSIMWLASLAVVIACAGA. Residues 110–130 traverse the membrane as a helical segment; sequence GSIMWLASLAVVIACAGAMKL. A glycan (N-linked (GlcNAc...) asparagine; by host) is linked at asparagine 142. The next 2 helical transmembrane spans lie at 254–274 and 280–294; these read WIIRNPGYAFLAAVLGWMLGS and VVFTILLLLVAPAYS. 6 disulfide bridges follow: cysteine 297/cysteine 324, cysteine 354/cysteine 410, cysteine 354/cysteine 415, cysteine 368/cysteine 399, cysteine 386/cysteine 410, and cysteine 386/cysteine 415. The interval 392-405 is fusion peptide; it reads DRGWGNGCGLFGKG. Asparagine 448 carries an N-linked (GlcNAc...) asparagine; by host glycan. Cystine bridges form between cysteine 484–cysteine 581 and cysteine 598–cysteine 629. 2 helical membrane passes run 747–767 and 774–794; these read FGGMSWITQGLMGALLLWMGV and IALAFLATGGVLVFLATNVHA. 6 cysteine pairs are disulfide-bonded: cysteine 798–cysteine 809, cysteine 849–cysteine 937, cysteine 973–cysteine 1017, cysteine 1074–cysteine 1123, cysteine 1085–cysteine 1106, and cysteine 1107–cysteine 1110. 2 N-linked (GlcNAc...) asparagine; by host glycosylation sites follow: asparagine 924 and asparagine 1001. The interval 1151 to 1177 is disordered; sequence MVDPFSAGPSGDVSGHPGSPSQEVDGQ.

As to quaternary structure, homodimer. Interacts (via N-terminus) with host EXOC1 (via C-terminus); this interaction results in EXOC1 degradation through the proteasome degradation pathway. Interacts with host CAPRIN1; this interaction is involved in the suppression of the integrated stress response. In terms of assembly, forms heterodimers with envelope protein E in the endoplasmic reticulum and Golgi. Homodimer; in the endoplasmic reticulum and Golgi. Interacts with protein prM. Interacts with non-structural protein 1. Post-translationally, genome polyprotein: Specific enzymatic cleavages in vivo yield mature proteins. Cleavages in the lumen of endoplasmic reticulum are performed by host signal peptidase, whereas cleavages in the cytoplasmic side are performed by serine protease NS3. Signal cleavage at the 2K-4B site requires a prior NS3 protease-mediated cleavage at the 4A-2K site. Cleaved in post-Golgi vesicles by a host furin, releasing the mature small envelope protein M, and peptide pr. This cleavage is incomplete as up to 30% of viral particles still carry uncleaved prM. In terms of processing, N-glycosylated.

It localises to the secreted. The protein resides in the virion membrane. The protein localises to the host endoplasmic reticulum membrane. Plays a role in virus budding by binding to the cell membrane and gathering the viral RNA into a nucleocapsid that forms the core of a mature virus particle. During virus entry, may induce genome penetration into the host cytoplasm after hemifusion induced by the surface proteins. Can migrate to the cell nucleus where it modulates host functions. Overcomes the anti-viral effects of host EXOC1 by sequestering and degrading the latter through the proteasome degradation pathway. Inhibits the integrated stress response (ISR) in the infected cell by binding to host CAPRIN1. Its function is as follows. Inhibits RNA silencing by interfering with host Dicer. Functionally, prevents premature fusion activity of envelope proteins in trans-Golgi by binding to envelope protein E at pH6.0. After virion release in extracellular space, gets dissociated from E dimers. In terms of biological role, acts as a chaperone for envelope protein E during intracellular virion assembly by masking and inactivating envelope protein E fusion peptide. prM is the only viral peptide matured by host furin in the trans-Golgi network probably to avoid catastrophic activation of the viral fusion activity in acidic Golgi compartment prior to virion release. prM-E cleavage is inefficient, and many virions are only partially matured. These uncleaved prM would play a role in immune evasion. May play a role in virus budding. Exerts cytotoxic effects by activating a mitochondrial apoptotic pathway through M ectodomain. May display a viroporin activity. Its function is as follows. Binds to host cell surface receptor and mediates fusion between viral and cellular membranes. Envelope protein is synthesized in the endoplasmic reticulum in the form of heterodimer with protein prM. They play a role in virion budding in the ER, and the newly formed immature particle is covered with 60 spikes composed of heterodimer between precursor prM and envelope protein E. The virion is transported to the Golgi apparatus where the low pH causes dissociation of PrM-E heterodimers and formation of E homodimers. prM-E cleavage is inefficient, and many virions are only partially matured. These uncleaved prM would play a role in immune evasion. Functionally, may play a role in neuroinvasiveness. The sequence is that of Structural polyprotein from Ardeidae (herons).